Here is a 1573-residue protein sequence, read N- to C-terminus: Pentafunctional AROM polypeptide 1 (1573 aa).

The 3-dehydroquinate synthase stretch occupies residues 1-380 (MAEPTKISIL…YEPKASVVSN (380 aa)). Residues 44–46 (DTN), 81–84 (ENSK), 112–114 (GGV), and aspartate 117 each bind NAD(+). Arginine 128 is a binding site for 7-phospho-2-dehydro-3-deoxy-D-arabino-heptonate. 137–138 (TT) is an NAD(+) binding site. 7-phospho-2-dehydro-3-deoxy-D-arabino-heptonate contacts are provided by aspartate 144 and lysine 150. NAD(+) is bound at residue lysine 159. Asparagine 160 is a binding site for 7-phospho-2-dehydro-3-deoxy-D-arabino-heptonate. Residues 177–180 (FIDT) and asparagine 188 contribute to the NAD(+) site. Glutamate 192 is a binding site for Zn(2+). 7-phospho-2-dehydro-3-deoxy-D-arabino-heptonate is bound by residues 192–195 (EVIK) and lysine 246. Residue glutamate 256 is the Proton acceptor; for 3-dehydroquinate synthase activity of the active site. Residues 260–264 (RNLLN) and histidine 267 contribute to the 7-phospho-2-dehydro-3-deoxy-D-arabino-heptonate site. Histidine 267 contacts Zn(2+). The active-site Proton acceptor; for 3-dehydroquinate synthase activity is the histidine 271. 7-phospho-2-dehydro-3-deoxy-D-arabino-heptonate contacts are provided by histidine 283 and lysine 352. Residue histidine 283 participates in Zn(2+) binding. The EPSP synthase stretch occupies residues 393-838 (VIPGVPKDLN…WDALKQKFGV (446 aa)). Residue cysteine 820 is the For EPSP synthase activity of the active site. A shikimate kinase region spans residues 859 to 1051 (DASIVIIGMR…RRKRLSFFMS (193 aa)). 866-873 (GMRGAGKT) contributes to the ATP binding site. The tract at residues 1052-1273 (LTLTDLRDSG…AAPGQLSAAE (222 aa)) is 3-dehydroquinase. Histidine 1175 (proton acceptor; for 3-dehydroquinate dehydratase activity) is an active-site residue. Lysine 1203 functions as the Schiff-base intermediate with substrate; for 3-dehydroquinate dehydratase activity in the catalytic mechanism. Residues 1286–1573 (AKKFAIFGKP…NAVLGTDETK (288 aa)) form a shikimate dehydrogenase region.

This sequence in the N-terminal section; belongs to the sugar phosphate cyclases superfamily. Dehydroquinate synthase family. In the 2nd section; belongs to the EPSP synthase family. The protein in the 3rd section; belongs to the shikimate kinase family. It in the 4th section; belongs to the type-I 3-dehydroquinase family. This sequence in the C-terminal section; belongs to the shikimate dehydrogenase family. Homodimer. The cofactor is Zn(2+).

Its subcellular location is the cytoplasm. The enzyme catalyses 7-phospho-2-dehydro-3-deoxy-D-arabino-heptonate = 3-dehydroquinate + phosphate. It catalyses the reaction 3-dehydroquinate = 3-dehydroshikimate + H2O. It carries out the reaction shikimate + NADP(+) = 3-dehydroshikimate + NADPH + H(+). The catalysed reaction is shikimate + ATP = 3-phosphoshikimate + ADP + H(+). The enzyme catalyses 3-phosphoshikimate + phosphoenolpyruvate = 5-O-(1-carboxyvinyl)-3-phosphoshikimate + phosphate. The protein operates within metabolic intermediate biosynthesis; chorismate biosynthesis; chorismate from D-erythrose 4-phosphate and phosphoenolpyruvate: step 2/7. It functions in the pathway metabolic intermediate biosynthesis; chorismate biosynthesis; chorismate from D-erythrose 4-phosphate and phosphoenolpyruvate: step 3/7. Its pathway is metabolic intermediate biosynthesis; chorismate biosynthesis; chorismate from D-erythrose 4-phosphate and phosphoenolpyruvate: step 4/7. It participates in metabolic intermediate biosynthesis; chorismate biosynthesis; chorismate from D-erythrose 4-phosphate and phosphoenolpyruvate: step 5/7. The protein operates within metabolic intermediate biosynthesis; chorismate biosynthesis; chorismate from D-erythrose 4-phosphate and phosphoenolpyruvate: step 6/7. In terms of biological role, the AROM polypeptide catalyzes 5 consecutive enzymatic reactions in prechorismate polyaromatic amino acid biosynthesis. This is Pentafunctional AROM polypeptide 1 from Talaromyces marneffei (strain ATCC 18224 / CBS 334.59 / QM 7333) (Penicillium marneffei).